Reading from the N-terminus, the 284-residue chain is Tropomyosin-1 (284 aa).

2 disordered regions span residues 1–26 (MDAI…DTCE) and 96–124 (EEDL…DENN). Positions 1-276 (MDAIKKKMQA…YKSLADEMDS (276 aa)) form a coiled coil. Over residues 12 to 26 (KLEKDNAMDKADTCE) the composition is skewed to basic and acidic residues. The span at 107–121 (GTAQQKLLEAQQSAD) shows a compositional bias: polar residues.

This sequence belongs to the tropomyosin family. In terms of assembly, homodimer.

In terms of biological role, tropomyosin, in association with the troponin complex, plays a central role in the calcium dependent regulation of muscle contraction. The sequence is that of Tropomyosin-1 from Bombyx mori (Silk moth).